Reading from the N-terminus, the 677-residue chain is NADPH--cytochrome P450 reductase (677 aa).

Residue Gly-2 is modified to N-acetylglycine. The Lumenal segment spans residues Gly-2–Ser-21. The helical transmembrane segment at Leu-22–Phe-42 threads the bilayer. Residues Leu-43 to Ser-677 lie on the Cytoplasmic side of the membrane. The residue at position 63 (Ser-63) is a Phosphoserine. One can recognise a Flavodoxin-like domain in the interval Ile-80–Trp-224. Residues Ser-86–Ala-91, Ala-138–Gly-141, Leu-173–Asn-182, and Asp-208 each bind FMN. The FAD-binding FR-type domain maps to Lys-279–Pro-521. Arg-298 serves as a coordination point for NADP(+). FAD is bound by residues Arg-424, Arg-454–Ser-457, Cys-472–Val-474, Tyr-478, and Gly-488–Thr-491. NADP(+) is bound by residues Thr-535, Ser-596–Arg-597, Lys-602–Gln-606, and Asp-638. FAD is bound at residue Trp-676.

It belongs to the NADPH--cytochrome P450 reductase family. The protein in the N-terminal section; belongs to the flavodoxin family. This sequence in the C-terminal section; belongs to the flavoprotein pyridine nucleotide cytochrome reductase family. FAD is required as a cofactor. FMN serves as cofactor.

It is found in the endoplasmic reticulum membrane. It catalyses the reaction 2 oxidized [cytochrome P450] + NADPH = 2 reduced [cytochrome P450] + NADP(+) + H(+). In terms of biological role, this enzyme is required for electron transfer from NADP to cytochrome P450 in microsomes. It can also provide electron transfer to heme oxygenase and cytochrome B5. The polypeptide is NADPH--cytochrome P450 reductase (Homo sapiens (Human)).